The following is a 416-amino-acid chain: Glutamyl-tRNA reductase (416 aa).

Substrate contacts are provided by residues Thr-50 to Arg-53, Ser-109, Glu-114 to Gln-116, and Gln-120. Catalysis depends on Cys-51, which acts as the Nucleophile. Gly-189–Ile-194 is a binding site for NADP(+).

The protein belongs to the glutamyl-tRNA reductase family. Homodimer.

It catalyses the reaction (S)-4-amino-5-oxopentanoate + tRNA(Glu) + NADP(+) = L-glutamyl-tRNA(Glu) + NADPH + H(+). The protein operates within porphyrin-containing compound metabolism; protoporphyrin-IX biosynthesis; 5-aminolevulinate from L-glutamyl-tRNA(Glu): step 1/2. In terms of biological role, catalyzes the NADPH-dependent reduction of glutamyl-tRNA(Glu) to glutamate 1-semialdehyde (GSA). The polypeptide is Glutamyl-tRNA reductase (Vesicomyosocius okutanii subsp. Calyptogena okutanii (strain HA)).